Consider the following 297-residue polypeptide: 4-hydroxy-tetrahydrodipicolinate synthase (297 aa).

Thr-47 contacts pyruvate. Tyr-135 functions as the Proton donor/acceptor in the catalytic mechanism. Catalysis depends on Lys-163, which acts as the Schiff-base intermediate with substrate. Ile-205 lines the pyruvate pocket.

It belongs to the DapA family. As to quaternary structure, homotetramer; dimer of dimers.

The protein resides in the cytoplasm. It carries out the reaction L-aspartate 4-semialdehyde + pyruvate = (2S,4S)-4-hydroxy-2,3,4,5-tetrahydrodipicolinate + H2O + H(+). It participates in amino-acid biosynthesis; L-lysine biosynthesis via DAP pathway; (S)-tetrahydrodipicolinate from L-aspartate: step 3/4. Functionally, catalyzes the condensation of (S)-aspartate-beta-semialdehyde [(S)-ASA] and pyruvate to 4-hydroxy-tetrahydrodipicolinate (HTPA). The sequence is that of 4-hydroxy-tetrahydrodipicolinate synthase from Dehalococcoides mccartyi (strain ATCC BAA-2266 / KCTC 15142 / 195) (Dehalococcoides ethenogenes (strain 195)).